Reading from the N-terminus, the 311-residue chain is Pyrimidine-specific ribonucleoside hydrolase RihA (311 aa).

His-240 is an active-site residue.

This sequence belongs to the IUNH family. RihA subfamily.

Its function is as follows. Hydrolyzes cytidine or uridine to ribose and cytosine or uracil, respectively. The polypeptide is Pyrimidine-specific ribonucleoside hydrolase RihA (Shigella flexneri serotype 5b (strain 8401)).